A 368-amino-acid chain; its full sequence is 1-deoxy-D-xylulose 5-phosphate reductoisomerase (368 aa).

Positions 9, 10, 11, 12, 35, and 106 each coordinate NADPH. Lys107 lines the 1-deoxy-D-xylulose 5-phosphate pocket. Glu108 is an NADPH binding site. Asp132 serves as a coordination point for Mn(2+). Residues Ser133, Glu134, Ser158, and His181 each coordinate 1-deoxy-D-xylulose 5-phosphate. Mn(2+) is bound at residue Glu134. Residue Gly187 participates in NADPH binding. 1-deoxy-D-xylulose 5-phosphate-binding residues include Ser194, Asn199, Lys200, and Glu203. Glu203 contributes to the Mn(2+) binding site.

The protein belongs to the DXR family. Requires Mg(2+) as cofactor. Mn(2+) serves as cofactor.

The catalysed reaction is 2-C-methyl-D-erythritol 4-phosphate + NADP(+) = 1-deoxy-D-xylulose 5-phosphate + NADPH + H(+). It functions in the pathway isoprenoid biosynthesis; isopentenyl diphosphate biosynthesis via DXP pathway; isopentenyl diphosphate from 1-deoxy-D-xylulose 5-phosphate: step 1/6. Its function is as follows. Catalyzes the NADPH-dependent rearrangement and reduction of 1-deoxy-D-xylulose-5-phosphate (DXP) to 2-C-methyl-D-erythritol 4-phosphate (MEP). In Mycoplasmoides gallisepticum (strain R(low / passage 15 / clone 2)) (Mycoplasma gallisepticum), this protein is 1-deoxy-D-xylulose 5-phosphate reductoisomerase.